We begin with the raw amino-acid sequence, 388 residues long: Probable pectin lyase F-1 (388 aa).

A signal peptide spans 1-19 (MKTATFSTLLALSASAVNA). The cysteines at positions 80 and 103 are disulfide-linked. Asn126 carries N-linked (GlcNAc...) asparagine glycosylation. Arg253 is an active-site residue. Cys328 and Cys336 are oxidised to a cystine.

It belongs to the polysaccharide lyase 1 family.

The protein resides in the secreted. It catalyses the reaction Eliminative cleavage of (1-&gt;4)-alpha-D-galacturonan methyl ester to give oligosaccharides with 4-deoxy-6-O-methyl-alpha-D-galact-4-enuronosyl groups at their non-reducing ends.. In terms of biological role, pectinolytic enzymes consist of four classes of enzymes: pectin lyase, polygalacturonase, pectin methylesterase and rhamnogalacturonase. Among pectinolytic enzymes, pectin lyase is the most important in depolymerization of pectin, since it cleaves internal glycosidic bonds of highly methylated pectins. The chain is Probable pectin lyase F-1 (pelF-1) from Aspergillus terreus (strain NIH 2624 / FGSC A1156).